A 492-amino-acid chain; its full sequence is Trehalose-phosphatase (492 aa).

A disordered region spans residues M1–D55. The segment covering Q17–A43 has biased composition (basic and acidic residues). 2 residues coordinate Mg(2+): D213 and D215. D215 (proton donor/acceptor) is an active-site residue. Q332 to K334 contributes to the substrate binding site. D424 contributes to the Mg(2+) binding site.

The protein belongs to the gob-1 trehalose phosphatase family. The cofactor is Mg(2+).

It catalyses the reaction alpha,alpha-trehalose 6-phosphate + H2O = alpha,alpha-trehalose + phosphate. With respect to regulation, inhibited by trehalose 6-sulfate. Its function is as follows. Catalyzes the hydrolysis of trehalose 6-phosphate to trehalose and phosphate; prevents the accumulation of toxic levels of trehalose 6-phosphate. The chain is Trehalose-phosphatase from Brugia malayi (Filarial nematode worm).